A 137-amino-acid chain; its full sequence is ATP synthase epsilon chain (137 aa).

Belongs to the ATPase epsilon chain family. In terms of assembly, F-type ATPases have 2 components, CF(1) - the catalytic core - and CF(0) - the membrane proton channel. CF(1) has five subunits: alpha(3), beta(3), gamma(1), delta(1), epsilon(1). CF(0) has three main subunits: a, b and c.

The protein localises to the cell inner membrane. Produces ATP from ADP in the presence of a proton gradient across the membrane. This chain is ATP synthase epsilon chain, found in Pseudoalteromonas atlantica (strain T6c / ATCC BAA-1087).